A 388-amino-acid polypeptide reads, in one-letter code: Ribonucleoside-diphosphate reductase subunit beta (388 aa).

Asp84, Glu115, and His118 together coordinate Fe cation. Tyr122 is an active-site residue. The Fe cation site is built by Glu212, Glu247, and His250.

The protein belongs to the ribonucleoside diphosphate reductase small chain family. As to quaternary structure, heterodimer of a large and a small subunit. The cofactor is Fe cation.

It catalyses the reaction a 2'-deoxyribonucleoside 5'-diphosphate + [thioredoxin]-disulfide + H2O = a ribonucleoside 5'-diphosphate + [thioredoxin]-dithiol. Functionally, provides the precursors necessary for DNA synthesis. Catalyzes the biosynthesis of deoxyribonucleotides from the corresponding ribonucleotides. The sequence is that of Ribonucleoside-diphosphate reductase subunit beta (NRDB) from Escherichia coli (Bacteriophage T4).